An 859-amino-acid polypeptide reads, in one-letter code: Leucine--tRNA ligase (859 aa).

The 'HIGH' region signature appears at P42–H52. A 'KMSKS' region motif is present at residues K618 to S622. Residue K621 participates in ATP binding.

The protein belongs to the class-I aminoacyl-tRNA synthetase family.

Its subcellular location is the cytoplasm. The enzyme catalyses tRNA(Leu) + L-leucine + ATP = L-leucyl-tRNA(Leu) + AMP + diphosphate. This chain is Leucine--tRNA ligase, found in Shewanella sp. (strain W3-18-1).